The chain runs to 121 residues: Basic phospholipase A2 F17 (121 aa).

Disulfide bonds link cysteine 25-cysteine 114, cysteine 27-cysteine 43, cysteine 42-cysteine 94, cysteine 48-cysteine 121, cysteine 49-cysteine 87, cysteine 56-cysteine 80, and cysteine 74-cysteine 85. 3 residues coordinate Ca(2+): tyrosine 26, glycine 28, and glycine 30. Histidine 46 is a catalytic residue. Aspartate 47 contributes to the Ca(2+) binding site. Residue aspartate 88 is part of the active site.

This sequence belongs to the phospholipase A2 family. Group II subfamily. D49 sub-subfamily. In terms of assembly, when this protein is associated with crotapotin (F5 or F7), it forms the crotoxin protein. Ca(2+) is required as a cofactor. Expressed by the venom gland.

The protein resides in the secreted. The enzyme catalyses a 1,2-diacyl-sn-glycero-3-phosphocholine + H2O = a 1-acyl-sn-glycero-3-phosphocholine + a fatty acid + H(+). Its activity is regulated as follows. Activated by heparin. Inhibited by its chaperone crotapotin. Functionally, snake venom phospholipase A2 (PLA2) that has anticoagulant activity and inhibits bactericial growth of the Gram-negative bacteria Xanthomonas axonopodis pv. passiflorae (in monomeric form). PLA2 catalyzes the calcium-dependent hydrolysis of the 2-acyl groups in 3-sn-phosphoglycerides. The sequence is that of Basic phospholipase A2 F17 from Crotalus durissus terrificus (South American rattlesnake).